The following is a 267-amino-acid chain: Indole-3-glycerol phosphate synthase (267 aa).

This sequence belongs to the TrpC family.

It catalyses the reaction 1-(2-carboxyphenylamino)-1-deoxy-D-ribulose 5-phosphate + H(+) = (1S,2R)-1-C-(indol-3-yl)glycerol 3-phosphate + CO2 + H2O. The protein operates within amino-acid biosynthesis; L-tryptophan biosynthesis; L-tryptophan from chorismate: step 4/5. The polypeptide is Indole-3-glycerol phosphate synthase (Polynucleobacter asymbioticus (strain DSM 18221 / CIP 109841 / QLW-P1DMWA-1) (Polynucleobacter necessarius subsp. asymbioticus)).